Reading from the N-terminus, the 245-residue chain is Probable phosphatase YpAngola_A2446 (245 aa).

The Zn(2+) site is built by H7, H9, H15, H40, E73, H101, H131, D192, and H194.

Belongs to the PHP family. As to quaternary structure, homotrimer. Requires Zn(2+) as cofactor.

This chain is Probable phosphatase YpAngola_A2446, found in Yersinia pestis bv. Antiqua (strain Angola).